The following is a 342-amino-acid chain: D-erythrose-4-phosphate dehydrogenase (342 aa).

12-13 lines the NAD(+) pocket; it reads RI. Residues 154-156, Arg200, 213-214, and Arg236 contribute to the substrate site; these read SCT and TK. Cys155 acts as the Nucleophile in catalysis. Residue Asn318 participates in NAD(+) binding.

This sequence belongs to the glyceraldehyde-3-phosphate dehydrogenase family. Epd subfamily. Homotetramer.

Its subcellular location is the cytoplasm. It catalyses the reaction D-erythrose 4-phosphate + NAD(+) + H2O = 4-phospho-D-erythronate + NADH + 2 H(+). Its pathway is cofactor biosynthesis; pyridoxine 5'-phosphate biosynthesis; pyridoxine 5'-phosphate from D-erythrose 4-phosphate: step 1/5. In terms of biological role, catalyzes the NAD-dependent conversion of D-erythrose 4-phosphate to 4-phosphoerythronate. The polypeptide is D-erythrose-4-phosphate dehydrogenase (Klebsiella pneumoniae subsp. pneumoniae (strain ATCC 700721 / MGH 78578)).